The sequence spans 92 residues: MKFFVLVAIAFALLACVAQAQPVSDVDPIPEDHVLVHEDAHQEVLQHSRQKRATCDLLSKWNWNHTACAGHCIAKGFKGGYCNDKAVCVCRN.

The signal sequence occupies residues 1 to 20 (MKFFVLVAIAFALLACVAQA). Residues 21–52 (QPVSDVDPIPEDHVLVHEDAHQEVLQHSRQKR) constitute a propeptide that is removed on maturation. Cystine bridges form between C55/C82, C68/C88, and C72/C90.

Belongs to the invertebrate defensin family. Type 1 subfamily. As to expression, hemolymph (at protein level).

The protein localises to the secreted. Functionally, responsible for the anti Gram-positive activity of immune hemolymph. Expressed in the absence of immune challenge during metamorphosis. In Drosophila melanogaster (Fruit fly), this protein is Defensin (Def).